A 75-amino-acid chain; its full sequence is Beta-defensin 30 (75 aa).

Positions 1–22 (MGSLQLTLVLFVLLSYVPPVRS) are cleaved as a signal peptide. 3 disulfides stabilise this stretch: Cys-35/Cys-62, Cys-42/Cys-56, and Cys-46/Cys-63.

It belongs to the beta-defensin family.

Its subcellular location is the secreted. Functionally, has antibacterial activity. In Mus musculus (Mouse), this protein is Beta-defensin 30 (Defb30).